A 274-amino-acid chain; its full sequence is Large ribosomal subunit protein uL2 (274 aa).

Disordered stretches follow at residues 37-59 (KAKN…GGHK) and 222-262 (GAAM…RTNK). Basic residues predominate over residues 50–59 (TTRHKGGGHK).

The protein belongs to the universal ribosomal protein uL2 family. As to quaternary structure, part of the 50S ribosomal subunit. Forms a bridge to the 30S subunit in the 70S ribosome.

One of the primary rRNA binding proteins. Required for association of the 30S and 50S subunits to form the 70S ribosome, for tRNA binding and peptide bond formation. It has been suggested to have peptidyltransferase activity; this is somewhat controversial. Makes several contacts with the 16S rRNA in the 70S ribosome. In Alcanivorax borkumensis (strain ATCC 700651 / DSM 11573 / NCIMB 13689 / SK2), this protein is Large ribosomal subunit protein uL2.